The primary structure comprises 207 residues: Small ribosomal subunit protein bS6c (207 aa).

Residues 1 to 59 (MASSLCVSNSTICPLPNVSSQPLLSFSHSLRPFISKSKPMCASIQKRDGSQFVVKSQAL) constitute a chloroplast transit peptide. The segment at 69–99 (GFGSDDDPTSPSGSGVSTALEDKPEPQCPPG) is disordered. Over residues 77-86 (TSPSGSGVST) the composition is skewed to low complexity.

The protein belongs to the bacterial ribosomal protein bS6 family. In terms of assembly, part of the 30S ribosomal subunit.

It localises to the plastid. It is found in the chloroplast. In terms of biological role, binds together with bS18 to 16S ribosomal RNA. The sequence is that of Small ribosomal subunit protein bS6c (RPS6) from Arabidopsis thaliana (Mouse-ear cress).